We begin with the raw amino-acid sequence, 139 residues long: NADPH-dependent 7-cyano-7-deazaguanine reductase (139 aa).

Cysteine 34 serves as the catalytic Thioimide intermediate. The active-site Proton donor is aspartate 41. Substrate-binding positions include 56 to 58 (VEL) and 75 to 76 (HE).

This sequence belongs to the GTP cyclohydrolase I family. QueF type 1 subfamily.

The protein localises to the cytoplasm. It carries out the reaction 7-aminomethyl-7-carbaguanine + 2 NADP(+) = 7-cyano-7-deazaguanine + 2 NADPH + 3 H(+). It participates in tRNA modification; tRNA-queuosine biosynthesis. In terms of biological role, catalyzes the NADPH-dependent reduction of 7-cyano-7-deazaguanine (preQ0) to 7-aminomethyl-7-deazaguanine (preQ1). The protein is NADPH-dependent 7-cyano-7-deazaguanine reductase of Nitrosospira multiformis (strain ATCC 25196 / NCIMB 11849 / C 71).